A 167-amino-acid chain; its full sequence is Cytochrome c-type biogenesis protein CcmE (167 aa).

Residues 1–7 are Cytoplasmic-facing; sequence MTRKQRR. The chain crosses the membrane as a helical; Signal-anchor for type II membrane protein span at residues 8-28; the sequence is LLMIGGAGVVLIVAVGLVLNA. The Periplasmic segment spans residues 29-167; sequence LRDSIVFFST…TSANAAEGGK (139 aa). Positions 122 and 126 each coordinate heme. Residues 137–150 are compositionally biased toward basic and acidic residues; sequence KDGHWKDDYGKKSP. Residues 137 to 167 form a disordered region; sequence KDGHWKDDYGKKSPGETTAGQTSANAAEGGK. Polar residues predominate over residues 151–161; the sequence is GETTAGQTSAN.

This sequence belongs to the CcmE/CycJ family.

The protein localises to the cell inner membrane. Heme chaperone required for the biogenesis of c-type cytochromes. Transiently binds heme delivered by CcmC and transfers the heme to apo-cytochromes in a process facilitated by CcmF and CcmH. The sequence is that of Cytochrome c-type biogenesis protein CcmE from Rhodopseudomonas palustris (strain ATCC BAA-98 / CGA009).